Reading from the N-terminus, the 180-residue chain is Large ribosomal subunit protein uL6 (180 aa).

Belongs to the universal ribosomal protein uL6 family. As to quaternary structure, part of the 50S ribosomal subunit.

This protein binds to the 23S rRNA, and is important in its secondary structure. It is located near the subunit interface in the base of the L7/L12 stalk, and near the tRNA binding site of the peptidyltransferase center. This chain is Large ribosomal subunit protein uL6, found in Clostridium botulinum (strain Okra / Type B1).